The sequence spans 168 residues: Sensor histidine kinase component HK1 (168 aa).

Positions 1–141 (MPITPLLHES…ELRITLPTPR (141 aa)) constitute a Histidine kinase; second part domain. Residues 137 to 168 (LPTPRPPFHEELPRITSSDTKDPNREHDTSDQ) form a disordered region. Basic and acidic residues predominate over residues 143–168 (PFHEELPRITSSDTKDPNREHDTSDQ).

As to quaternary structure, interacts with HK2.

The enzyme catalyses ATP + protein L-histidine = ADP + protein N-phospho-L-histidine.. Member of the three-protein two-component system HK1/HK2/TcrA. Kinase that binds ATP and catalyzes the transfer of a phosphoryl group from ATP to HK2. The protein is Sensor histidine kinase component HK1 of Mycobacterium tuberculosis (strain ATCC 25618 / H37Rv).